A 565-amino-acid polypeptide reads, in one-letter code: NAD-dependent malic enzyme (565 aa).

Tyr-104 acts as the Proton donor in catalysis. Arg-157 is an NAD(+) binding site. The active-site Proton acceptor is the Lys-175. Residues Glu-246, Asp-247, and Asp-270 each contribute to the a divalent metal cation site. Residues Asp-270 and Asn-418 each coordinate NAD(+).

Belongs to the malic enzymes family. In terms of assembly, homotetramer. Mg(2+) serves as cofactor. Mn(2+) is required as a cofactor.

The enzyme catalyses (S)-malate + NAD(+) = pyruvate + CO2 + NADH. It carries out the reaction oxaloacetate + H(+) = pyruvate + CO2. In Escherichia coli O157:H7, this protein is NAD-dependent malic enzyme.